Consider the following 872-residue polypeptide: Protein SEY1 (872 aa).

Over 1–749 the chain is Cytoplasmic; sequence MVANGHFAGV…KRSAIGGITQ (749 aa). The GB1/RHD3-type G domain occupies 49–294; it reads GFNYHLISVF…IEGGIFLPEY (246 aa). Residue 59–66 coordinates GTP; that stretch reads GSQSTGKS. Positions 482–504 form a coiled coil; that stretch reads SNYQQELSLYQKDLENIGGQLRR. A disordered region spans residues 676-704; the sequence is LDKWIGHTPSSATPADEEDLTPIGGVDED. Positions 690–704 are enriched in acidic residues; sequence ADEEDLTPIGGVDED. Residues 750 to 770 form a helical membrane-spanning segment; sequence VPLYFYGLLLALGWNEIVAVL. Residues 771–773 are Lumenal-facing; it reads RNP. A helical membrane pass occupies residues 774-794; it reads AYFLLLFVCAVTAYVTYQLNL. Residues 795-872 lie on the Cytoplasmic side of the membrane; sequence WGPIIKMTEA…IDDADDDDDF (78 aa). A disordered region spans residues 849–872; it reads NRKSAGGFQNNRSHIDDADDDDDF.

Belongs to the TRAFAC class dynamin-like GTPase superfamily. GB1/RHD3 GTPase family. RHD3 subfamily.

It localises to the endoplasmic reticulum membrane. Cooperates with the reticulon proteins and tubule-shaping DP1 family proteins to generate and maintain the structure of the tubular endoplasmic reticulum network. Has GTPase activity, which is required for its function in ER organization. The sequence is that of Protein SEY1 from Paracoccidioides brasiliensis (strain Pb03).